We begin with the raw amino-acid sequence, 201 residues long: Dephospho-CoA kinase (201 aa).

A DPCK domain is found at 4-201 (AFFVTASIAC…VIQEISKGKM (198 aa)). Residue 12-17 (ACGKST) participates in ATP binding.

It belongs to the CoaE family.

It localises to the cytoplasm. The enzyme catalyses 3'-dephospho-CoA + ATP = ADP + CoA + H(+). Its pathway is cofactor biosynthesis; coenzyme A biosynthesis; CoA from (R)-pantothenate: step 5/5. In terms of biological role, catalyzes the phosphorylation of the 3'-hydroxyl group of dephosphocoenzyme A to form coenzyme A. The chain is Dephospho-CoA kinase from Campylobacter jejuni (strain RM1221).